A 318-amino-acid chain; its full sequence is MATYCDDLGPSSAPPGQAQATAHPPGYEPGDLGAVGGGPLLWVNAPALSPKSYASGPGPAPPYAAPSYGAPGPLLGAPGGLAGADLAWLSLSGQQELLRLVRPPYSYSALIAMAIQSAPLRKLTLSQIYQYVAGNFPFYKRSKAGWQNSIRHNLSLNDCFKKVPRDEDDPGKGNYWTLDPNCEKMFDNGNFRRKRKRRAEASAAVRSGARSVGGAEAPALEPPSAACLDLQASPSPSAPEAATCFSGFASAMSALAGGLGTFPGGLAGDFSFGRRPPTVATHAPQTLNPSPGFAPGHQTAAAGFRLSHLLYSREGTEV.

Residues 1-30 (MATYCDDLGPSSAPPGQAQATAHPPGYEPG) are disordered. A DNA-binding region (fork-head) is located at residues 102 to 196 (RPPYSYSALI…DNGNFRRKRK (95 aa)).

It localises to the nucleus. Functionally, possible transcriptional activator. The chain is Forkhead box protein I2 (FOXI2) from Homo sapiens (Human).